The primary structure comprises 354 residues: Src kinase-associated phosphoprotein 1 (354 aa).

Residues 107–210 enclose the PH domain; sequence NVIKQGYLEK…WVDQISFLLK (104 aa). Phosphotyrosine occurs at positions 142 and 236. Phosphotyrosine; by FYN occurs at positions 267 and 290. Positions 285-290 are interaction with FYB1; sequence RRRVDY. An SH3 domain is found at 289 to 350; sequence DYADYYQGLW…PKDYLTTAFE (62 aa).

The protein belongs to the SKAP family. As to quaternary structure, homodimer. Interacts with FYN. Interacts with PTPRC. Interacts with GRB2 when phosphorylated on Tyr-267. Interacts with FYB1, which is required for SKAP2 protein stability. Part of a complex consisting of SKAP1, FYB1 and CLNK. Interacts with RASGRP1. Interacts with FYB2. Post-translationally, phosphorylated on tyrosines. Phosphorylation by FYN on Tyr-267 is required for GRB2 interaction. Phosphorylation by FYN on Tyr-290 abolishes interaction with FYB1. Tyr-236 is dephosphorylated by PTPRC. Expressed in mast cells (at protein level).

The protein resides in the cytoplasm. It localises to the nucleus. The protein localises to the cell membrane. In terms of biological role, positively regulates T-cell receptor signaling by enhancing the MAP kinase pathway. Required for optimal conjugation between T-cells and antigen-presenting cells by promoting the clustering of integrin ITGAL on the surface of T-cells. May be involved in high affinity immunoglobulin epsilon receptor signaling in mast cells. The chain is Src kinase-associated phosphoprotein 1 (Skap1) from Rattus norvegicus (Rat).